Reading from the N-terminus, the 31-residue chain is Cytochrome b6-f complex subunit 6 (31 aa).

The helical transmembrane segment at 4–26 threads the bilayer; that stretch reads ITSYFGFLLAALTITPALLISLN.

It belongs to the PetL family. In terms of assembly, the 4 large subunits of the cytochrome b6-f complex are cytochrome b6, subunit IV (17 kDa polypeptide, PetD), cytochrome f and the Rieske protein, while the 4 small subunits are PetG, PetL, PetM and PetN. The complex functions as a dimer.

It is found in the plastid. The protein resides in the chloroplast thylakoid membrane. Component of the cytochrome b6-f complex, which mediates electron transfer between photosystem II (PSII) and photosystem I (PSI), cyclic electron flow around PSI, and state transitions. PetL is important for photoautotrophic growth as well as for electron transfer efficiency and stability of the cytochrome b6-f complex. This Dioscorea elephantipes (Elephant's foot yam) protein is Cytochrome b6-f complex subunit 6.